A 643-amino-acid polypeptide reads, in one-letter code: E3 ubiquitin-protein ligase Praja-1 (643 aa).

Positions 1–363 are disordered; the sequence is MGQESSKPVW…SDDYYKYCDE (363 aa). Basic and acidic residues-rich tracts occupy residues 95-105, 145-158, and 173-183; these read DYSRYPPREYR, KFKD…EKGA, and RDVREERDKLD. Positions 200–209 are enriched in low complexity; it reads QSSVASQSSS. Basic and acidic residues predominate over residues 213 to 227; that stretch reads LATKGDSSERERREQ. Ser265 is modified (phosphoserine). Phosphothreonine is present on Thr277. Basic and acidic residues-rich tracts occupy residues 289–310 and 320–362; these read RWRD…RGRG and KYPE…KYCD. A phosphoserine mark is found at Ser365 and Ser367. The interval 380–454 is disordered; it reads RSREQTLSSS…REPSLQEEQA (75 aa). A compositionally biased stretch (low complexity) spans 410-439; the sequence is SASTGTSPGPGASASAGAGAGASAGSNGSN. The RING-type zinc finger occupies 595–636; it reads CPICCSEYVKGEVATELPCHHYFHKPCVSIWLQKSGTCPVCR.

Binds ubiquitin-conjugating enzymes (E2s). In vitro, interacts with the ubiquitin-conjugating enzyme, UBE2D2. Post-translationally, substrate for E2-dependent ubiquitination. As to expression, expressed in various regions of the brain including the cerebellum, cerebral cortex, medulla, occipital pole, frontal lobe, temporal lobe and putamen. Highest levels in the cerebral cortex.

It carries out the reaction S-ubiquitinyl-[E2 ubiquitin-conjugating enzyme]-L-cysteine + [acceptor protein]-L-lysine = [E2 ubiquitin-conjugating enzyme]-L-cysteine + N(6)-ubiquitinyl-[acceptor protein]-L-lysine.. Functionally, has E2-dependent E3 ubiquitin-protein ligase activity. Ubiquitinates MAGED1 antigen leading to its subsequent degradation by proteasome. May be involved in protein sorting. This is E3 ubiquitin-protein ligase Praja-1 (PJA1) from Homo sapiens (Human).